A 265-amino-acid polypeptide reads, in one-letter code: Selenoprotein Pb (265 aa).

An N-terminal signal peptide occupies residues 1–18; sequence MQALWPLLLSALPALLGA. N-linked (GlcNAc...) asparagine glycosylation is present at Asn28. Position 64 (Sec64) is a non-standard amino acid, selenocysteine. 4 N-linked (GlcNAc...) asparagine glycosylation sites follow: Asn88, Asn178, Asn184, and Asn207. The tract at residues 188 to 265 is disordered; it reads SESSDSTKND…SHQEHVHNHR (78 aa). The span at 201–211 shows a compositional bias: polar residues; the sequence is ENNQRPNSTEP. Positions 215–231 are enriched in basic residues; that stretch reads AHHHHHQQHEPHHHHHN. Over residues 239–265 the composition is skewed to basic and acidic residues; sequence KSGDSDVTGKPKEPPHHSHQEHVHNHR.

It is found in the secreted. Functionally, might be responsible for some of the extracellular antioxidant defense properties of selenium. In Danio rerio (Zebrafish), this protein is Selenoprotein Pb (sepp1b).